Here is a 275-residue protein sequence, read N- to C-terminus: 2,3,4,5-tetrahydropyridine-2,6-dicarboxylate N-succinyltransferase (275 aa).

Positions 105 and 142 each coordinate substrate.

The protein belongs to the transferase hexapeptide repeat family. Homotrimer.

Its subcellular location is the cytoplasm. The enzyme catalyses (S)-2,3,4,5-tetrahydrodipicolinate + succinyl-CoA + H2O = (S)-2-succinylamino-6-oxoheptanedioate + CoA. The protein operates within amino-acid biosynthesis; L-lysine biosynthesis via DAP pathway; LL-2,6-diaminopimelate from (S)-tetrahydrodipicolinate (succinylase route): step 1/3. The protein is 2,3,4,5-tetrahydropyridine-2,6-dicarboxylate N-succinyltransferase of Pectobacterium atrosepticum (strain SCRI 1043 / ATCC BAA-672) (Erwinia carotovora subsp. atroseptica).